Here is a 267-residue protein sequence, read N- to C-terminus: Glutamate racemase (267 aa).

Residues 9 to 10 and 41 to 42 each bind substrate; these read DS and YS. Residue Cys73 is the Proton donor/acceptor of the active site. 74–75 provides a ligand contact to substrate; sequence NT. Cys184 serves as the catalytic Proton donor/acceptor. 185-186 is a binding site for substrate; the sequence is TH.

The protein belongs to the aspartate/glutamate racemases family.

The catalysed reaction is L-glutamate = D-glutamate. The protein operates within cell wall biogenesis; peptidoglycan biosynthesis. Functionally, provides the (R)-glutamate required for cell wall biosynthesis. In Glaesserella parasuis serovar 5 (strain SH0165) (Haemophilus parasuis), this protein is Glutamate racemase.